Reading from the N-terminus, the 175-residue chain is Orotate phosphoribosyltransferase (175 aa).

Residues arginine 89, lysine 90, lysine 93, and 115 to 123 (EDIATTGQS) each bind 5-phospho-alpha-D-ribose 1-diphosphate. Orotate contacts are provided by threonine 119 and arginine 147.

It belongs to the purine/pyrimidine phosphoribosyltransferase family. PyrE subfamily. In terms of assembly, homodimer. Requires Mg(2+) as cofactor.

The enzyme catalyses orotidine 5'-phosphate + diphosphate = orotate + 5-phospho-alpha-D-ribose 1-diphosphate. Its pathway is pyrimidine metabolism; UMP biosynthesis via de novo pathway; UMP from orotate: step 1/2. Its function is as follows. Catalyzes the transfer of a ribosyl phosphate group from 5-phosphoribose 1-diphosphate to orotate, leading to the formation of orotidine monophosphate (OMP). The sequence is that of Orotate phosphoribosyltransferase from Halobacterium salinarum (strain ATCC 700922 / JCM 11081 / NRC-1) (Halobacterium halobium).